The primary structure comprises 663 residues: Bicarbonate transport ATP-binding protein CmpC (663 aa).

Residues 5 to 239 form the ABC transporter domain; sequence VAVENIEKSF…RPRKRMDVVH (235 aa). 42 to 49 provides a ligand contact to ATP; that stretch reads GHSGCGKS. Residues 281-663 form a cmpA-like region; sequence LEIGYVPLMA…LDQPRPIAAA (383 aa).

This sequence belongs to the ABC transporter superfamily. Nitrate/nitrite/cyanate uptake transporter (NitT) (TC 3.A.1.16) family. The complex is composed of two ATP-binding proteins (CmpC and CmpD), a transmembrane protein (CmpB) and a solute-binding protein (CmpA).

Its subcellular location is the cell inner membrane. Functionally, part of the ABC transporter complex CmpABCD involved in bicarbonate transport. Responsible for energy coupling to the transport system. This is Bicarbonate transport ATP-binding protein CmpC (cmpC) from Synechococcus elongatus (strain ATCC 33912 / PCC 7942 / FACHB-805) (Anacystis nidulans R2).